Reading from the N-terminus, the 119-residue chain is Beta-2-microglobulin (119 aa).

An N-terminal signal peptide occupies residues 1–20 (MARSVAVVFLMLLSVVCLDA). The Ig-like C1-type domain maps to 25–114 (PQVQVYTRHP…TTLKEPKVVT (90 aa)). C45 and C100 are oxidised to a cystine.

It belongs to the beta-2-microglobulin family. In terms of assembly, heterodimer of an alpha chain and a beta chain. Beta-2-microglobulin is the beta-chain of major histocompatibility complex class I molecules.

It localises to the secreted. Functionally, component of the class I major histocompatibility complex (MHC). Involved in the presentation of peptide antigens to the immune system. This Cricetulus griseus (Chinese hamster) protein is Beta-2-microglobulin (B2M).